Consider the following 464-residue polypeptide: MAHVRHFRTLVSGFYFWEAALLLSLVATKETNSARSRSAPMSPSDFLDKLMGRTSGYDARIRPNFKGPPVNVTCNIFINSFGSIAETTMDYRVNIFLRQKWNDPRLAYSEYPDDSLDLDPSMLDSIWKPDLFFANEKGANFHEVTTDNKLLRIFKNGNVLYSIRLTLTLSCPMDLKNFPMDVQTCIMQLESFGYTMNDLIFEWQDEAPVQVAEGLTLPQFLLKEEKDLRYCTKHYNTGKFTCIEVRFHLERQMGYYLIQMYIPSLLIVILSWVSFWINMDAAPARVALGITTVLTMTTQSSGSRASLPKVSYVKAIDIWMAVCLLFVFSALLEYAAVNFVSRQHKELLRFRRKRKNKTEAFALEKFYRFSDTDDEVRESRFSFTAYGMGPCLQAKDGVVPKGPNHAVQVMPKSPDEMRKVFIDRAKKIDTISRACFPLAFLIFNIFYWVIYKILRHEDIHQQQD.

Positions 1-33 (MAHVRHFRTLVSGFYFWEAALLLSLVATKETNS) are cleaved as a signal peptide. Topologically, residues 34–255 (ARSRSAPMSP…RFHLERQMGY (222 aa)) are extracellular. N-linked (GlcNAc...) asparagine glycosylation occurs at Asn71. Cys171 and Cys185 form a disulfide bridge. Zn(2+) is bound by residues Glu225 and Asp227. Cys231 and Cys242 are joined by a disulfide. 235–240 (YNTGKF) serves as a coordination point for strychnine. His248 provides a ligand contact to Zn(2+). A helical transmembrane segment spans residues 256–277 (YLIQMYIPSLLIVILSWVSFWI). Topologically, residues 278-282 (NMDAA) are cytoplasmic. A helical membrane pass occupies residues 283-303 (PARVALGITTVLTMTTQSSGS). The Extracellular segment spans residues 304-314 (RASLPKVSYVK). The helical transmembrane segment at 315–335 (AIDIWMAVCLLFVFSALLEYA) threads the bilayer. Residues 336 to 430 (AVNFVSRQHK…FIDRAKKIDT (95 aa)) are Cytoplasmic-facing. Ser370 carries the post-translational modification Phosphoserine. Ser379 carries the phosphoserine; by PKA modification. Residues 431–451 (ISRACFPLAFLIFNIFYWVIY) traverse the membrane as a helical segment. Residues 452–464 (KILRHEDIHQQQD) are Extracellular-facing.

The protein belongs to the ligand-gated ion channel (TC 1.A.9) family. Glycine receptor (TC 1.A.9.3) subfamily. GLRA3 sub-subfamily. In terms of assembly, homopentamer (in vitro). Heteropentamer composed of GLRA3 and GLRB. Both homopentamers and heteropentamers form functional ion channels, but their characteristics are subtly different. In terms of processing, phosphorylated by PKA; this causes down-regulation of channel activity. Dephosphorylated in response to activation of HTR1A signaling; this increases channel activity. As to expression, detected in brainstem, also in neurons that control rhythmic breathing. Detected in superficial laminae of the dorsal horn of the thoracic spinal cord. Detected in dentate gyrus in hippocampus, especially in stratum granulare. Detected in the inner plexiform layer in the retina (at protein level). Detected in midbrain, thalamus, brain cortex, hippocampus, and at lower levels in cerebellum.

The protein localises to the postsynaptic cell membrane. It localises to the synapse. It is found in the perikaryon. Its subcellular location is the cell projection. The protein resides in the dendrite. The protein localises to the cell membrane. It catalyses the reaction chloride(in) = chloride(out). With respect to regulation, inhibited by prostaglandin E2, probably via PKA-mediated phosphorylation at Ser-379. Functionally, glycine receptors are ligand-gated chloride channels. Channel opening is triggered by extracellular glycine. Channel characteristics depend on the subunit composition; heteropentameric channels display faster channel closure. Plays an important role in the down-regulation of neuronal excitability. Contributes to the generation of inhibitory postsynaptic currents. Contributes to increased pain perception in response to increased prostaglandin E2 levels. Plays a role in the regulation of breathing rhythm, especially of the duration of the postinspiratory phase. Plays a role in cellular responses to ethanol. This is Glycine receptor subunit alpha-3 (Glra3) from Mus musculus (Mouse).